The chain runs to 141 residues: Putative pre-16S rRNA nuclease (141 aa).

This sequence belongs to the YqgF nuclease family.

Its subcellular location is the cytoplasm. Its function is as follows. Could be a nuclease involved in processing of the 5'-end of pre-16S rRNA. In Coxiella burnetii (strain CbuK_Q154) (Coxiella burnetii (strain Q154)), this protein is Putative pre-16S rRNA nuclease.